A 467-amino-acid chain; its full sequence is ATP synthase subunit beta (467 aa).

150-157 contributes to the ATP binding site; sequence GGAGVGKT.

It belongs to the ATPase alpha/beta chains family. As to quaternary structure, F-type ATPases have 2 components, CF(1) - the catalytic core - and CF(0) - the membrane proton channel. CF(1) has five subunits: alpha(3), beta(3), gamma(1), delta(1), epsilon(1). CF(0) has three main subunits: a(1), b(2) and c(9-12). The alpha and beta chains form an alternating ring which encloses part of the gamma chain. CF(1) is attached to CF(0) by a central stalk formed by the gamma and epsilon chains, while a peripheral stalk is formed by the delta and b chains.

It localises to the cell inner membrane. It catalyses the reaction ATP + H2O + 4 H(+)(in) = ADP + phosphate + 5 H(+)(out). Produces ATP from ADP in the presence of a proton gradient across the membrane. The catalytic sites are hosted primarily by the beta subunits. The polypeptide is ATP synthase subunit beta (Polaromonas sp. (strain JS666 / ATCC BAA-500)).